The chain runs to 485 residues: Peptidyl-prolyl isomerase CWC27 (485 aa).

The region spanning 11–167 is the PPIase cyclophilin-type domain; that stretch reads SSGLVDLVTS…YPIKLHEVRV (157 aa). A disordered region spans residues 173 to 485; that stretch reads DDLQPRTTKK…PQQRRQRSII (313 aa). Basic and acidic residues-rich tracts occupy residues 184–204 and 236–247; these read RIAE…EEQK and SSHDLLKDDKHL. Polar residues-rich tracts occupy residues 249-270, 278-292, 315-325, and 353-370; these read RQTI…ANIS, AQSS…VTKQ, PSDQKASSSTG, and ALLS…STTP. Positions 381–398 are enriched in acidic residues; it reads DEVEEEAGEYGASDDDDD. A compositionally biased stretch (basic and acidic residues) spans 428–465; the sequence is LDPRDHTDRERNPKAESSRDGKRGRDWVEHDRKYQNDR. The segment covering 466 to 485 has biased composition (basic residues); sequence SRRHREHDKHPQQRRQRSII.

It belongs to the cyclophilin-type PPIase family. CWC27 subfamily. As to quaternary structure, associated with the spliceosome.

It is found in the cytoplasm. The protein resides in the nucleus. The catalysed reaction is [protein]-peptidylproline (omega=180) = [protein]-peptidylproline (omega=0). PPIases accelerate the folding of proteins. It catalyzes the cis-trans isomerization of proline imidic peptide bonds in oligopeptides. Involved in pre-mRNA splicing. The chain is Peptidyl-prolyl isomerase CWC27 (CWC27) from Mycosarcoma maydis (Corn smut fungus).